A 1997-amino-acid chain; its full sequence is Otoferlin (1997 aa).

Residues 1 to 98 enclose the C2 1 domain; the sequence is MALIVHLKTV…VEENRVEVTD (98 aa). Topologically, residues 1–1963 are cytoplasmic; it reads MALIVHLKTV…ARYFLWHTYR (1963 aa). The segment at 140–167 is disordered; the sequence is QEEKDSQETDGLLPGSRPSTRISGEKSF. 2 consecutive C2 domains span residues 235 to 356 and 399 to 530; these read KRSK…HKWA and IEGN…FLPT. Positions 643–692 are disordered; the sequence is VDGMSRPLRPRPRKEPGDEEEVDLIQNSSDDEGDEAGDLASVSSTPPMRP. A compositionally biased stretch (acidic residues) spans 659–679; that stretch reads GDEEEVDLIQNSSDDEGDEAG. Residues 791–820 are a coiled coil; it reads RERLKSCMRELESMGQQAKSLRAQVKRHTV. C2 domains are found at residues 943-1068 and 1115-1241; these read LHSF…PPRF and RGPI…PNWN. Ca(2+) contacts are provided by Asp-975, Asp-981, Asp-1037, Asp-1039, and Asp-1045. 3 disordered regions span residues 1253–1272, 1296–1326, and 1343–1402; these read LRNG…SMEP, DVAE…ESML, and LRQH…EKKK. Acidic residues-rich tracts occupy residues 1314 to 1325 and 1352 to 1361; these read EEPEEEEPDESM and DLEEKEEMES. Positions 1370-1383 are enriched in basic and acidic residues; it reads KSKEKSRAAKEEKK. 2 consecutive C2 domains span residues 1464-1593 and 1714-1865; these read LPED…ATCG and DMPA…KQCT. Ca(2+) is bound by residues Asp-1508, Asp-1514, Asp-1563, Asp-1565, Asp-1571, Asp-1836, Ser-1839, and Asp-1842. The helical transmembrane segment at 1964 to 1984 threads the bilayer; that stretch reads WLLLKFLLLFLLLLLFALFLY. Over 1985–1997 the chain is Extracellular; the sequence is SLPGYLAKKILGA.

Belongs to the ferlin family. As to quaternary structure, interacts with SNAP25; the interaction is direct. Interacts with STX1; the interaction is direct. Interacts with RAB8B. Ca(2+) serves as cofactor. Isoform 1 is expressed in cochlea and brain. Expressed in the cochlear and vestibular hair cells. Expressed in both inner and outer hair cells (IHCs and OHCs) and cochlear ganglions neurons at postnatal day 2 (P2) and 6 (P6). Expressed only in IHCs at postnatal day 60 (P60) (at protein level). Strongly expressed in brain and inner ear. In the inner ear, it is mainly expressed in the cochlear IHC and vestibular type I sensory hair cells. Weakly expressed in eye, heart, skeletal muscle, liver, kidney, lung and testis.

The protein localises to the cytoplasmic vesicle. The protein resides in the secretory vesicle. It localises to the synaptic vesicle membrane. It is found in the basolateral cell membrane. Its subcellular location is the endoplasmic reticulum membrane. The protein localises to the golgi apparatus membrane. The protein resides in the presynaptic cell membrane. It localises to the cell membrane. Functionally, key calcium ion sensor involved in the Ca(2+)-triggered synaptic vesicle-plasma membrane fusion and in the control of neurotransmitter release at these output synapses. Interacts in a calcium-dependent manner to the presynaptic SNARE proteins at ribbon synapses of cochlear inner hair cells (IHCs) to trigger exocytosis of neurotransmitter. Also essential to synaptic exocytosis in immature outer hair cells (OHCs). May also play a role within the recycling of endosomes. The chain is Otoferlin (Otof) from Mus musculus (Mouse).